The sequence spans 317 residues: Aspartate carbamoyltransferase catalytic subunit (317 aa).

Arg-66 and Thr-67 together coordinate carbamoyl phosphate. Lys-94 contributes to the L-aspartate binding site. Residues Arg-116, His-144, and Gln-147 each coordinate carbamoyl phosphate. The L-aspartate site is built by Arg-177 and Arg-231. Carbamoyl phosphate is bound by residues Gly-272 and Pro-273.

The protein belongs to the aspartate/ornithine carbamoyltransferase superfamily. ATCase family. As to quaternary structure, heterododecamer (2C3:3R2) of six catalytic PyrB chains organized as two trimers (C3), and six regulatory PyrI chains organized as three dimers (R2).

The enzyme catalyses carbamoyl phosphate + L-aspartate = N-carbamoyl-L-aspartate + phosphate + H(+). The protein operates within pyrimidine metabolism; UMP biosynthesis via de novo pathway; (S)-dihydroorotate from bicarbonate: step 2/3. Functionally, catalyzes the condensation of carbamoyl phosphate and aspartate to form carbamoyl aspartate and inorganic phosphate, the committed step in the de novo pyrimidine nucleotide biosynthesis pathway. The chain is Aspartate carbamoyltransferase catalytic subunit from Rhodopseudomonas palustris (strain HaA2).